The sequence spans 320 residues: ATP-dependent 6-phosphofructokinase (320 aa).

G12 contacts ATP. An ADP-binding site is contributed by R22–R26. ATP is bound by residues R73–F74 and G103–S106. D104 provides a ligand contact to Mg(2+). Residue T126–D128 coordinates substrate. The Proton acceptor role is filled by D128. An ADP-binding site is contributed by R155. Residues R163 and M170–R172 contribute to the substrate site. Residues G186–E188, K212, and K214–H216 contribute to the ADP site. Substrate-binding positions include E223, R244, and H250 to R253.

Belongs to the phosphofructokinase type A (PFKA) family. ATP-dependent PFK group I subfamily. Prokaryotic clade 'B1' sub-subfamily. As to quaternary structure, homotetramer. The cofactor is Mg(2+).

The protein localises to the cytoplasm. The catalysed reaction is beta-D-fructose 6-phosphate + ATP = beta-D-fructose 1,6-bisphosphate + ADP + H(+). Its pathway is carbohydrate degradation; glycolysis; D-glyceraldehyde 3-phosphate and glycerone phosphate from D-glucose: step 3/4. Allosterically activated by ADP and other diphosphonucleosides, and allosterically inhibited by phosphoenolpyruvate. Functionally, catalyzes the phosphorylation of D-fructose 6-phosphate to fructose 1,6-bisphosphate by ATP, the first committing step of glycolysis. This Vibrio cholerae serotype O1 (strain ATCC 39315 / El Tor Inaba N16961) protein is ATP-dependent 6-phosphofructokinase.